The following is a 447-amino-acid chain: MLENIRDAVRKFLTRSTPYEKAVDEFIKELQKSLISSDVNVKLVFSLTAKIKERLNKEKPPSVLERKEWFISIVYDELSKLFGGDKEPNVNPTKLPFIIMLVGVQGSGKTTTAGKLAYFYKRRGYKVGLVAADVYRPAAYDQLLQLGNQIGVPVYGEPNNQNAIEIAKKGVDTFVKNKMDIIIVDTAGRHGYGEETKLLEEMKEIYEALKPDDVILVIDASIGQKAYDLASRFHQASPIGSIIITKMDGTAKGGGALSAVAATGATIKFIGTGEKIDELEIFNAKRYVSRILGMGDIESILEKVKGLEEYEKIQKKMEDVMEGKGKLTLRDVYAQIMALRKMGPLSKVLQHIPGLGVMLPTPSEDQLKLGEEKIRRWLAALNSMTYKELENPSIIDKSRMRRIAEGSGLEVEDVRELLEWYNNMNKLLKMVKRRRGSIDKLFGGKIG.

GTP contacts are provided by residues G103–T110, D185–R189, and T245–D248.

It belongs to the GTP-binding SRP family. SRP54 subfamily. In terms of assembly, part of the signal recognition particle protein translocation system, which is composed of SRP and FtsY. Archaeal SRP consists of a 7S RNA molecule of 300 nucleotides and two protein subunits: SRP54 and SRP19.

The protein resides in the cytoplasm. It catalyses the reaction GTP + H2O = GDP + phosphate + H(+). Its function is as follows. Involved in targeting and insertion of nascent membrane proteins into the cytoplasmic membrane. Binds to the hydrophobic signal sequence of the ribosome-nascent chain (RNC) as it emerges from the ribosomes. The SRP-RNC complex is then targeted to the cytoplasmic membrane where it interacts with the SRP receptor FtsY. The polypeptide is Signal recognition particle 54 kDa protein (Saccharolobus islandicus (strain Y.N.15.51 / Yellowstone #2) (Sulfolobus islandicus)).